The primary structure comprises 188 residues: UPF0397 protein LCK_00164 (188 aa).

Transmembrane regions (helical) follow at residues 15 to 35 (VVATGIGAAVFFVLMKFIAIP), 48 to 68 (GWLALIAGLFGPVVGLLVGLI), 79 to 99 (GAPWWSWVIADGVFGLLLGFG), 121 to 141 (WQAVSNVLVWVIIAPLGDIII), and 154 to 174 (AVTTVVNTISVAIIGSLLLVA).

This sequence belongs to the UPF0397 family.

It localises to the cell membrane. The protein is UPF0397 protein LCK_00164 of Leuconostoc citreum (strain KM20).